The primary structure comprises 927 residues: MSENEIVPDEFRCNRSDGKQWRCKRRALEGKKMCESHHSQQSLKRSKQKVAESSKLVRSRRGGGDEVASSEIEPNESRIRSKRLGKSKRKRVMGEAEAMDEAVKKMKLKRGDLQLDLIRMVLKREVEKRKRLPNSNNKKKSNGGFSEFVGEELTRVLPNGIMAISPPSPTTSNVSSPCDVKVGEEPISMIKRRFRSKNIEPLPIGKMQVVPFKGDLVNGRKEKKMRCHWCGTRGFGDLISCLSCEREFFCIDCIEKRNKGSKEEVEKKCPVCRGSCRCKVCSVTNSGVTECKDSQSVRSDIDRVLHLHYAVCMLLPVLKEINAEHKVEVENDAEKKEGNPAEPQIHSSELTSDDRQPCSNGRDFAVVDLQRMCTRSSSVLRLNSDQDQSQESLSRKVGSVKCSNGIKSPKVCKRKEVKGCSNNLFLSLFPLELTSKLEISAEEVVSCYELPEILDKYSGCPFCIGMETQSSSSDSHLKEASKTREDGTGNFLYYPTVLDFHQNNLEHFQTHWSKGHPVIVRSVIKSGSSLNWDPVALFCHYLMNRNNKTGNTTDCMDWFEVEIGVKQFFLGSLRGKAETNTCQERLKLEGWLSSSLFKEQFPNHYAEILNILPISHYMDPKRGLLNIAANLPDTVQPPDFGPCLNISYRSGEEYAQPDSVKKLGFETCDMVDILLYVTETPVSTNQICRIRKLMKNIGRVRSKNPAKGRESRFDKGKKRDRLDDYSSSDSESSQHCLGAKCRGSEFEGEERESCNYSCEEESLSNTYGAQWDVFQKQDVSKLLEYIKNHSLELESMDSSKKKVSHPLLEQSYYLDEYHKARLKEEFDVEPWSFDQCVGEAVILPAGCPYQIRKNKSCVNAVLKFLSPEHVSESIKRVKELNQLPQSVKSKANKIEVKKMAIHKISEAVKEIRELTSSDSTGALRLYN.

In terms of domain architecture, WRC spans 7 to 52 (VPDEFRCNRSDGKQWRCKRRALEGKKMCESHHSQQSLKRSKQKVAE). A Nuclear localization signal 1 motif is present at residues 30–37 (GKKMCESH). Positions 30–92 (GKKMCESHHS…RLGKSKRKRV (63 aa)) are disordered. The segment covering 80 to 91 (RSKRLGKSKRKR) has biased composition (basic residues). The short motif at 127 to 134 (EKRKRLPN) is the Nuclear localization signal 2 element. Zn(2+) contacts are provided by Cys227, Cys230, Cys241, Cys244, Cys250, Cys253, Cys269, and Cys272. Residues 227–273 (CHWCGTRGFGDLISCLSCEREFFCIDCIEKRNKGSKEEVEKKCPVCR) form an RING-type; degenerate zinc finger. Residues 330-339 (ENDAEKKEGN) show a composition bias toward basic and acidic residues. 2 disordered regions span residues 330–359 (ENDAEKKEGNPAEPQIHSSELTSDDRQPCS) and 701–736 (RSKNPAKGRESRFDKGKKRDRLDDYSSSDSESSQHC). In terms of domain architecture, JmjC spans 601 to 881 (FPNHYAEILN…ESIKRVKELN (281 aa)).

It belongs to the JARID1 histone demethylase family. In terms of assembly, interacts with the FBH transcription factors FBH1, FBH2, FBH3 and FBH4. Fe(2+) is required as a cofactor. As to expression, expressed in inflorescences, flowers, roots, siliques, leaves and stems, especially in the vasculature (mainly phloem), with highest levels in floral organs. Present at high levels in flowers, shoot apex and young seeds, but observed at low levels in dry seeds, root apex and anthers.

It is found in the nucleus. In terms of biological role, may function as histone H3 lysine demethylase and be involved in regulation of gene expression. Regulates flowering time by promoting CONSTANS (CO) and CONSTANS-LIKE genes (e.g. COL2 and COL5) expression via interaction with FBH transcription factors (FBH1, FBH2, FBH3 and FBH4) at their loci to remove H3K9me2 repressive histone marks. Also modulates the expression of several developmental genes such as MYB30, TFS1, AGL6 and RVE2. The chain is Lysine-specific demethylase JMJ28 from Arabidopsis thaliana (Mouse-ear cress).